The chain runs to 412 residues: FAD-dependent monooxygenase nscC (412 aa).

The N-terminal stretch at 1–21 (MGKQQETILIIGAGIAGLTTS) is a signal peptide. FAD-binding residues include Glu35 and Ala46. An N-linked (GlcNAc...) asparagine glycan is attached at Asn92. Arg119 contacts FAD. Asn170 and Asn231 each carry an N-linked (GlcNAc...) asparagine glycan. Asp326 and Gly339 together coordinate FAD.

It belongs to the paxM FAD-dependent monooxygenase family. FAD is required as a cofactor.

It participates in secondary metabolite biosynthesis. In terms of biological role, FAD-dependent monooxygenase; part of the gene cluster that mediates the biosynthesis of neosartoricin B, a prenylated anthracenone that probably exhibits T-cell antiproliferative activity, suggestive of a physiological role as an immunosuppressive agent. The non-reducing polyketide synthase nscA probably synthesizes and cyclizes the decaketide backbone. The hydrolase nscB then mediates the product release through hydrolysis followed by spontaneous decarboxylation. The prenyltransferase nscD catalyzes the addition of the dimethylallyl group to the aromatic C5. The FAD-dependent monooxygenase nscC is then responsible for the stereospecific hydroxylation at C2. Neosartoricin B can be converted into two additional compounds neosartoricins C and D. Neosartoricin C is a spirocyclic compound that is cyclized through the attack of C3 hydroxyl on C14, followed by dehydration. On the other hand, neosartoricin D is a further cyclized compound in which attack of C2 on C14 in neosartoricin C results in the formation of the acetal-containing dioxabicyclo-octanone ring. Both of these compounds are novel and possibly represent related metabolites of the gene cluster. This chain is FAD-dependent monooxygenase nscC, found in Arthroderma benhamiae (strain ATCC MYA-4681 / CBS 112371) (Trichophyton mentagrophytes).